The following is a 461-amino-acid chain: Alkaline phosphatase 4 (461 aa).

The first 41 residues, 1 to 41, serve as a signal peptide directing secretion; sequence MKKMSLFQNMKSKLLPIAAVSVLTAGIFAGAELQQTEKASA. Asp58 is a binding site for Mg(2+). Asp58 is a Zn(2+) binding site. Residue Ser108 is the Phosphoserine intermediate of the active site. Mg(2+) contacts are provided by Thr161 and Glu282. Zn(2+)-binding residues include Asp287, His291, Asp329, His330, and His423.

It belongs to the alkaline phosphatase family. As to quaternary structure, monomer. Mg(2+) serves as cofactor. Requires Zn(2+) as cofactor.

The catalysed reaction is a phosphate monoester + H2O = an alcohol + phosphate. The chain is Alkaline phosphatase 4 (phoA) from Bacillus subtilis (strain 168).